We begin with the raw amino-acid sequence, 341 residues long: tRNA N6-adenosine threonylcarbamoyltransferase (341 aa).

Residues His-111 and His-115 each coordinate Fe cation. Substrate contacts are provided by residues 134-138, Asp-167, Gly-180, and Asn-276; that span reads LVSGG. Position 304 (Asp-304) interacts with Fe cation.

This sequence belongs to the KAE1 / TsaD family. It depends on Fe(2+) as a cofactor.

Its subcellular location is the cytoplasm. The enzyme catalyses L-threonylcarbamoyladenylate + adenosine(37) in tRNA = N(6)-L-threonylcarbamoyladenosine(37) in tRNA + AMP + H(+). Functionally, required for the formation of a threonylcarbamoyl group on adenosine at position 37 (t(6)A37) in tRNAs that read codons beginning with adenine. Is involved in the transfer of the threonylcarbamoyl moiety of threonylcarbamoyl-AMP (TC-AMP) to the N6 group of A37, together with TsaE and TsaB. TsaD likely plays a direct catalytic role in this reaction. The protein is tRNA N6-adenosine threonylcarbamoyltransferase of Alteromonas mediterranea (strain DSM 17117 / CIP 110805 / LMG 28347 / Deep ecotype).